A 555-amino-acid polypeptide reads, in one-letter code: Potassium-transporting ATPase potassium-binding subunit (555 aa).

10 consecutive transmembrane segments (helical) span residues 2 to 22 (IWVA…PTGI), 60 to 80 (QYAL…YFIF), 130 to 150 (IGIT…VMAF), 173 to 193 (VFLP…VPQT), 246 to 266 (MSNI…PFTY), 278 to 298 (ILFV…TTSE), 374 to 394 (AGFV…GLMV), 412 to 432 (LIAV…ALAL), 483 to 503 (LVMF…AASL), and 525 to 545 (GIFI…MLVL).

The protein belongs to the KdpA family. As to quaternary structure, the system is composed of three essential subunits: KdpA, KdpB and KdpC.

It localises to the cell membrane. Its function is as follows. Part of the high-affinity ATP-driven potassium transport (or Kdp) system, which catalyzes the hydrolysis of ATP coupled with the electrogenic transport of potassium into the cytoplasm. This subunit binds the extracellular potassium ions and delivers the ions to the membrane domain of KdpB through an intramembrane tunnel. The sequence is that of Potassium-transporting ATPase potassium-binding subunit from Bacillus cereus (strain 03BB102).